The following is a 208-amino-acid chain: Coiled-coil domain-containing protein 25 (208 aa).

Topologically, residues Met1–Asp105 are extracellular. A DNA-binding region spans residues Lys21–Glu25. Lys23 carries the post-translational modification N6-acetyllysine. Residues Val106–Val122 traverse the membrane as a helical segment. Residues Val117–Ser187 adopt a coiled-coil conformation. Residues Glu123–Met208 lie on the Cytoplasmic side of the membrane. The segment covering Glu145–Arg184 has biased composition (basic and acidic residues). Residues Glu145 to Met208 are disordered. Ser204 is modified (phosphoserine).

Belongs to the CCDC25 family. In terms of assembly, interacts (via cytoplasmic region) with ILK.

It is found in the cell membrane. The protein localises to the endomembrane system. Functionally, transmembrane receptor that senses neutrophil extracellular traps (NETs) and triggers the ILK-PARVB pathway to enhance cell motility. NETs are mainly composed of DNA fibers and are released by neutrophils to bind pathogens during inflammation. Formation of NETs is also associated with cancer metastasis, NET-DNA acting as a chemotactic factor to attract cancer cells. Specifically binds NETs on its extracellular region, in particular the 8-OHdG-enriched DNA present in NETs, and recruits ILK, initiating the ILK-PARVB cascade to induce cytoskeleton rearrangement and directional migration of cells. The chain is Coiled-coil domain-containing protein 25 from Bos taurus (Bovine).